The chain runs to 981 residues: Probable NAD kinase 2, chloroplastic (981 aa).

A calmodulin-binding region spans residues 319 to 364; that stretch reads APSAEQVQRFAEIVSDSAKKPIYLHSQEGISRTSAMVSRWKQYVTR. Disordered stretches follow at residues 369–413 and 551–601; these read ATQN…DRTM and TNGK…AERN. Composition is skewed to polar residues over residues 387-406, 551-563, and 581-596; these read TEQLTNSPGFSSEGSENGTP, TNGKPSNNGASTS, and SDTSNSNGNAPLGSQK.

Belongs to the NAD kinase family.

It is found in the plastid. Its subcellular location is the chloroplast. It catalyses the reaction NAD(+) + ATP = ADP + NADP(+) + H(+). Its function is as follows. Involved in chlorophyll synthesis and chloroplast protection against oxidative damage. The sequence is that of Probable NAD kinase 2, chloroplastic from Oryza sativa subsp. japonica (Rice).